Consider the following 448-residue polypeptide: Protein odr-4 homolog (448 aa).

The next 2 helical transmembrane spans lie at 76–96 and 428–448; these read ASQL…FLMT and GLLI…YYII.

This sequence belongs to the ODR-4 family.

The protein localises to the membrane. May play a role in the trafficking of a subset of G-protein coupled receptors. This Xenopus tropicalis (Western clawed frog) protein is Protein odr-4 homolog (odr4).